Consider the following 65-residue polypeptide: Cytochrome b-c1 complex subunit 9, mitochondrial (65 aa).

The chain crosses the membrane as a helical span at residues isoleucine 14–valine 34.

This sequence belongs to the UQCR10/QCR9 family. In terms of assembly, component of the ubiquinol-cytochrome c oxidoreductase (cytochrome b-c1 complex, complex III, CIII), a multisubunit enzyme composed of 10 subunits. The complex is composed of 3 respiratory subunits cytochrome b (COB), cytochrome c1 (CYT1) and Rieske protein (RIP1), 2 core protein subunits COR1 and QCR2, and 5 low-molecular weight protein subunits QCR6, QCR7, QCR8, QCR9 and QCR10. The complex exists as an obligatory dimer and forms supercomplexes (SCs) in the inner mitochondrial membrane with a monomer or a dimer of cytochrome c oxidase (complex IV, CIV), resulting in 2 different assemblies (supercomplexes III(2)IV and III(2)IV(2)).

The protein localises to the membrane. The protein resides in the mitochondrion inner membrane. In terms of biological role, component of the ubiquinol-cytochrome c oxidoreductase, a multisubunit transmembrane complex that is part of the mitochondrial electron transport chain which drives oxidative phosphorylation. The complex plays an important role in the uptake of multiple carbon sources present in different host niches. The protein is Cytochrome b-c1 complex subunit 9, mitochondrial of Candida albicans (strain SC5314 / ATCC MYA-2876) (Yeast).